The primary structure comprises 277 residues: Large ribosomal subunit protein uL2 (277 aa).

The segment at 220-277 (VRGSVMNPNDHPHGGGEGKAPIGRPSPMSPWGKKTLGKKTRSSKARSEKLIIRHRKSR) is disordered. Over residues 254–263 (TLGKKTRSSK) the composition is skewed to basic residues.

The protein belongs to the universal ribosomal protein uL2 family. In terms of assembly, part of the 50S ribosomal subunit. Forms a bridge to the 30S subunit in the 70S ribosome.

Its function is as follows. One of the primary rRNA binding proteins. Required for association of the 30S and 50S subunits to form the 70S ribosome, for tRNA binding and peptide bond formation. It has been suggested to have peptidyltransferase activity; this is somewhat controversial. Makes several contacts with the 16S rRNA in the 70S ribosome. This chain is Large ribosomal subunit protein uL2, found in Latilactobacillus sakei subsp. sakei (strain 23K) (Lactobacillus sakei subsp. sakei).